Here is a 111-residue protein sequence, read N- to C-terminus: Translation initiation factor 1A (111 aa).

In terms of domain architecture, S1-like spans G12–L86.

The protein belongs to the eIF-1A family.

Its function is as follows. Seems to be required for maximal rate of protein biosynthesis. Enhances ribosome dissociation into subunits and stabilizes the binding of the initiator Met-tRNA(I) to 40 S ribosomal subunits. This is Translation initiation factor 1A (eIF1A) from Aeropyrum pernix (strain ATCC 700893 / DSM 11879 / JCM 9820 / NBRC 100138 / K1).